Consider the following 413-residue polypeptide: MTISYSGNVIRILLRWKGSIWRTAWKELLIYLILYYSVRVFYLKGIDLIDDDEDDRLKMRRMFETFCRQCDSYTRLIPLTFLLGFYVSNVVARWWRQFETLYWPEDILSVLCTVLHQHDEKSKRRRHTIARYLNLANALAWRDISSKIRLRFPSVHSLIESGLLTEKEYQILEAMHAENESSRWITPLHWIQLIMRQVEEEHKPTASLFNQFVGELRIFRQSLRKLYSYDWVCVPLVYTQVAALATYSFFFFTLFGRQPLFPDIETGKELDLVVPVFTIVQFLFFVGWFKVGQDLMRPFGLDDDDIELNYILDRNVRISFAIVNQLQESPIPDFESNDDKLWHEMHPPTKDGETSPIPRIPQLPHSKYSKQLSEHPPRLHAYVPIDDGKGSIKDLESHHGCVSLKKDKKHISW.

A run of 4 helical transmembrane segments spans residues 29-49 (LIYLILYYSVRVFYLKGIDLI), 72-92 (SYTRLIPLTFLLGFYVSNVVA), 236-256 (LVYTQVAALATYSFFFFTLFG), and 272-292 (LVVPVFTIVQFLFFVGWFKVG).

This sequence belongs to the anion channel-forming bestrophin (TC 1.A.46) family. Calcium-sensitive chloride channel subfamily. In terms of assembly, forms oligomers.

The protein localises to the cell membrane. In terms of biological role, forms chloride channels. This is Bestrophin homolog 13 (best-13) from Caenorhabditis elegans.